The sequence spans 227 residues: Glutathione S-transferase U17 (227 aa).

The GST N-terminal domain occupies Ser4–Gly83. Glutathione is bound by residues Ser14–Pro15, Ser40–Lys41, Lys54–Ile55, and Glu67–Ser68. One can recognise a GST C-terminal domain in the interval Asp90–Phe222.

The protein belongs to the GST superfamily. Tau family.

It is found in the cytoplasm. Its subcellular location is the cytosol. The catalysed reaction is RX + glutathione = an S-substituted glutathione + a halide anion + H(+). Involved in light signaling, mainly phyA-mediated photomorphogenesis and in the integration of various phytohormone signals to modulate various aspects of plant development by affecting glutathione pools. In vitro, possesses glutathione S-transferase activity toward 1-chloro-2,4-dinitrobenzene (CDNB) and benzyl isothiocyanate (BITC). This Arabidopsis thaliana (Mouse-ear cress) protein is Glutathione S-transferase U17 (GSTU17).